The following is a 95-amino-acid chain: Cliotide T5 (95 aa).

Positions 1–30 (GIPCGESCVFIPCISTVIGCSCKNKVCYRN) form a cross-link, cyclopeptide (Gly-Asn). Intrachain disulfides connect Cys-4-Cys-20, Cys-8-Cys-22, and Cys-13-Cys-27. The propeptide at 31–95 (HVIAAEAKTM…KDHLKMSITN (65 aa)) is removed in mature form.

Contains 3 disulfide bonds. Post-translationally, this is a cyclic peptide. Expressed in stem, shoot, root, leaf, pod and nodule but not in flower and seed (at protein level).

Its function is as follows. Probably participates in a plant defense mechanism. The chain is Cliotide T5 from Clitoria ternatea (Butterfly pea).